The chain runs to 192 residues: NADH dehydrogenase [ubiquinone] iron-sulfur protein 3 (192 aa).

This sequence belongs to the complex I 30 kDa subunit family. Complex I is composed of about 45 different subunits. This is a component of the iron-sulfur (IP) fragment of the enzyme.

The protein localises to the mitochondrion inner membrane. The enzyme catalyses a ubiquinone + NADH + 5 H(+)(in) = a ubiquinol + NAD(+) + 4 H(+)(out). Core subunit of the mitochondrial membrane respiratory chain NADH dehydrogenase (Complex I) that is believed to belong to the minimal assembly required for catalysis. Complex I functions in the transfer of electrons from NADH to the respiratory chain. The immediate electron acceptor for the enzyme is believed to be ubiquinone. The polypeptide is NADH dehydrogenase [ubiquinone] iron-sulfur protein 3 (NAD9) (Patellifolia webbiana (Patellaria webbiana)).